Consider the following 318-residue polypeptide: Trans-prenyltransferase (318 aa).

The helical transmembrane segment at methionine 1 to threonine 21 threads the bilayer. Isopentenyl diphosphate is bound by residues lysine 85, arginine 88, and histidine 122. The Mg(2+) site is built by aspartate 129 and aspartate 135. Arginine 140 lines the dimethylallyl diphosphate pocket. Residue arginine 141 participates in isopentenyl diphosphate binding. Positions 216, 217, and 254 each coordinate dimethylallyl diphosphate.

Belongs to the FPP/GGPP synthase family. Asfivirus trans-prenyltransferase subfamily. Mg(2+) is required as a cofactor.

It localises to the host endoplasmic reticulum. The protein resides in the host membrane. The catalysed reaction is isopentenyl diphosphate + dimethylallyl diphosphate = (2E)-geranyl diphosphate + diphosphate. It catalyses the reaction isopentenyl diphosphate + (2E)-geranyl diphosphate = (2E,6E)-farnesyl diphosphate + diphosphate. It carries out the reaction isopentenyl diphosphate + (2E,6E)-farnesyl diphosphate = (2E,6E,10E)-geranylgeranyl diphosphate + diphosphate. The enzyme catalyses isopentenyl diphosphate + (2E,6E,10E)-geranylgeranyl diphosphate = (2E,6E,10E,14E)-geranylfarnesyl diphosphate + diphosphate. It participates in isoprenoid biosynthesis; farnesyl diphosphate biosynthesis; farnesyl diphosphate from geranyl diphosphate and isopentenyl diphosphate: step 1/1. It functions in the pathway isoprenoid biosynthesis; geranyl diphosphate biosynthesis; geranyl diphosphate from dimethylallyl diphosphate and isopentenyl diphosphate: step 1/1. Its pathway is isoprenoid biosynthesis; geranylgeranyl diphosphate biosynthesis; geranylgeranyl diphosphate from farnesyl diphosphate and isopentenyl diphosphate: step 1/1. Trans-prenyltransferase that catalyzes the sequential condensation of isopentenyl diphosphate (IPP) with different allylic diphosphates, such as dimethylallyl diphosphate (DMAPP), geranyl diphosphate (GPP), farnesyl diphosphate (FPP) and geranylgeranyl diphosphate (GGPP), farnesyl diphosphate being the best allylic substrate. The sequence is that of Trans-prenyltransferase from African swine fever virus (strain Badajoz 1971 Vero-adapted) (Ba71V).